The sequence spans 222 residues: UPF0585 protein CG18661 (222 aa).

It belongs to the UPF0585 family.

This Drosophila melanogaster (Fruit fly) protein is UPF0585 protein CG18661.